Consider the following 875-residue polypeptide: Alanine--tRNA ligase (875 aa).

Zn(2+) contacts are provided by H564, H568, C666, and H670.

The protein belongs to the class-II aminoacyl-tRNA synthetase family. Homotetramer. Requires Zn(2+) as cofactor.

Its subcellular location is the cytoplasm. It catalyses the reaction tRNA(Ala) + L-alanine + ATP = L-alanyl-tRNA(Ala) + AMP + diphosphate. Functionally, catalyzes the attachment of alanine to tRNA(Ala) in a two-step reaction: alanine is first activated by ATP to form Ala-AMP and then transferred to the acceptor end of tRNA(Ala). Also edits incorrectly charged Ser-tRNA(Ala) and Gly-tRNA(Ala) via its editing domain. The polypeptide is Alanine--tRNA ligase (Yersinia pseudotuberculosis serotype IB (strain PB1/+)).